Consider the following 1203-residue polypeptide: Cingulin (1203 aa).

A head region spans residues 7–357; it reads MAEPRGPVDH…VMISSGSTKA (351 aa). Positions 25 to 48 are disordered; sequence EPVSGAEMGTLRRGGRRPAKDARA. The ZIM motif lies at 48–62; it reads ASTYGVAVRVQGIAG. Residues 54–67 form an interaction with TJP1/ZO1 region; sequence AVRVQGIAGQPFVV. Residues 89-268 are disordered; that stretch reads EASGALGSDF…PPSGFSRSRQ (180 aa). Ser-96, Ser-135, Ser-137, Ser-140, Ser-155, and Ser-165 each carry phosphoserine. Residues 166 to 191 show a composition bias toward polar residues; sequence PGSTIDTAPLSSVDSLINKFDSQLGG. Residues 207–231 show a composition bias toward basic and acidic residues; that stretch reads EQRKRSKSLDSRLPRDTLEERERQS. Phosphoserine occurs at positions 214, 217, 258, 276, 338, and 351. The span at 246–267 shows a compositional bias: low complexity; it reads GSSKQPSQSQSPSPPSGFSRSR. Positions 358–1160 form a coiled coil; that stretch reads VAGQGELTRK…SLEKDSWRKA (803 aa). Lys-579 carries the N6-acetyllysine modification. Over residues 883-903 the composition is skewed to basic and acidic residues; it reads ARREVADAQRQAKDWASEAEK. 2 disordered regions span residues 883–908 and 1160–1181; these read ARREVADAQRQAKDWASEAEKTSGGL and ASRSAAESALKHEGLSSDEEFD. The segment at 1161 to 1203 is tail; that stretch reads SRSAAESALKHEGLSSDEEFDSVYDPSSIASLLTESNLQTSSC. Phosphoserine occurs at positions 1175, 1176, and 1182.

The protein belongs to the cingulin family. As to quaternary structure, homodimer. Interacts with TJP1/ZO1 and SPEF1.

The protein localises to the cell junction. Its subcellular location is the tight junction. In terms of biological role, probably plays a role in the formation and regulation of the tight junction (TJ) paracellular permeability barrier. This chain is Cingulin, found in Papio anubis (Olive baboon).